Here is a 253-residue protein sequence, read N- to C-terminus: Sulfate transporter CysZ (253 aa).

Transmembrane regions (helical) follow at residues 31 to 51, 75 to 95, 151 to 171, and 222 to 242; these read FVIL…WWLF, LLWP…FSTI, IVLL…PVLW, and IPLL…AMWV.

This sequence belongs to the CysZ family.

It localises to the cell inner membrane. High affinity, high specificity proton-dependent sulfate transporter, which mediates sulfate uptake. Provides the sulfur source for the cysteine synthesis pathway. This is Sulfate transporter CysZ from Escherichia coli (strain 55989 / EAEC).